We begin with the raw amino-acid sequence, 192 residues long: Ras-like GTP-binding protein O-RHO (192 aa).

12 to 19 (GDGACGKT) is a GTP binding site. Residues 34–42 (YVPTVFENY) carry the Effector region motif. GTP is bound by residues 59–63 (DTAGQ) and 117–120 (NKKT). Residue cysteine 189 is modified to Cysteine methyl ester. A lipid anchor (S-geranylgeranyl cysteine) is attached at cysteine 189. The propeptide at 190 to 192 (LLL) is removed in mature form.

The protein belongs to the small GTPase superfamily. Rho family.

Its subcellular location is the cell membrane. This chain is Ras-like GTP-binding protein O-RHO, found in Diplobatis ommata (Ocellated electric ray).